Here is a 184-residue protein sequence, read N- to C-terminus: Protein C8 (184 aa).

An N-terminal signal peptide occupies residues 1 to 21; that stretch reads MSSIRFIACLYLISIFGNCHE.

It belongs to the poxviridae C8 protein family.

This chain is Protein C8, found in Vaccinia virus (strain Copenhagen) (VACV).